The chain runs to 301 residues: MAQSLKDLAGRLPAGPRGVGTALKLLLGAGALAYGVRESVFIVEGGQRAIFFNRIGGVQQDTILAEGLHFRIPWFQYPIIYDIRARPRKISSPTGSKDLQMVNISLRVLTRPNAAELPSMYQRLGLDYEERVLPSIVNEVLKSVVAKFNASQLITQRAQVSLLIRRELTERAKDFSLILDDVAITELSFSREYTAAVEAKQVAQQEAQRAQFLVEKAKQEQKQKIVQAEGEATAAKMLGEALSRNPGYIKLRKIRAAQNISKTIAGSQNRVYLTADNLVLNLQDEGFTRGSDSLLLKQGKK.

Necessary for transcriptional repression regions lie at residues 19–49 and 150–174; these read VGTA…GQRA and ASQL…RAKD. Positions 190-237 form a coiled coil; the sequence is SREYTAAVEAKQVAQQEAQRAQFLVEKAKQEQKQKIVQAEGEATAAKM.

The protein belongs to the prohibitin family. As to quaternary structure, the mitochondrial prohibitin complex consists of two subunits (PHB1 and PHB2), assembled into a membrane-associated ring-shaped supercomplex of approximately 1 mDa.

The protein localises to the mitochondrion inner membrane. It localises to the cytoplasm. The protein resides in the nucleus. Its subcellular location is the cell membrane. In terms of biological role, protein with pleiotropic attributes mediated in a cell-compartment- and tissue-specific manner, which include the plasma membrane-associated cell signaling functions, mitochondrial chaperone, and transcriptional co-regulator of transcription factors and sex steroid hormones in the nucleus. Functionally, in the mitochondria, together with PHB, forms large ring complexes (prohibitin complexes) in the inner mitochondrial membrane (IMM) and functions as a chaperone protein that stabilizes mitochondrial respiratory enzymes and maintains mitochondrial integrity in the IMM, which is required for mitochondrial morphogenesis, neuronal survival, and normal lifespan. In the nucleus, serves as transcriptional co-regulator. This Gallus gallus (Chicken) protein is Prohibitin-2 (PHB2).